We begin with the raw amino-acid sequence, 301 residues long: Ribosomal protein L11 methyltransferase (301 aa).

Residues T146, G167, D189, and N237 each contribute to the S-adenosyl-L-methionine site.

It belongs to the methyltransferase superfamily. PrmA family.

It is found in the cytoplasm. It catalyses the reaction L-lysyl-[protein] + 3 S-adenosyl-L-methionine = N(6),N(6),N(6)-trimethyl-L-lysyl-[protein] + 3 S-adenosyl-L-homocysteine + 3 H(+). Functionally, methylates ribosomal protein L11. This is Ribosomal protein L11 methyltransferase from Prochlorococcus marinus (strain MIT 9313).